Reading from the N-terminus, the 412-residue chain is Mitochondrial distribution and morphology protein 12 (412 aa).

Residues 1–410 form the SMP-LTD domain; sequence MSIDLEWAKL…FPNFHTLVMG (410 aa). 4 disordered regions span residues 66–96, 108–136, 166–238, and 314–354; these read EDDEDDSSTSPVKVTEGQLDAHGGEDDDGYE, YTEGGGHGGNGSHLPMHLRHPPLRSSPTD, QGSG…QQEN, and PAGD…KPLP. Residues 220–238 show a composition bias toward low complexity; it reads NQPVFPSQQPQQQQPQQEN.

This sequence belongs to the MDM12 family. In terms of assembly, component of the ER-mitochondria encounter structure (ERMES) or MDM complex, composed of MMM1, MDM10, MDM12 and MDM34. An MMM1 homodimer associates with one molecule of MDM12 on each side in a pairwise head-to-tail manner, and the SMP-LTD domains of MMM1 and MDM12 generate a continuous hydrophobic tunnel for phospholipid trafficking.

It is found in the mitochondrion outer membrane. It localises to the endoplasmic reticulum membrane. Component of the ERMES/MDM complex, which serves as a molecular tether to connect the endoplasmic reticulum (ER) and mitochondria. Components of this complex are involved in the control of mitochondrial shape and protein biogenesis, and function in nonvesicular lipid trafficking between the ER and mitochondria. MDM12 is required for the interaction of the ER-resident membrane protein MMM1 and the outer mitochondrial membrane-resident beta-barrel protein MDM10. The MDM12-MMM1 subcomplex functions in the major beta-barrel assembly pathway that is responsible for biogenesis of all mitochondrial outer membrane beta-barrel proteins, and acts in a late step after the SAM complex. The MDM10-MDM12-MMM1 subcomplex further acts in the TOM40-specific pathway after the action of the MDM12-MMM1 complex. Essential for establishing and maintaining the structure of mitochondria and maintenance of mtDNA nucleoids. In Coprinopsis cinerea (strain Okayama-7 / 130 / ATCC MYA-4618 / FGSC 9003) (Inky cap fungus), this protein is Mitochondrial distribution and morphology protein 12.